Consider the following 270-residue polypeptide: 4-hydroxy-tetrahydrodipicolinate reductase (270 aa).

NAD(+) contacts are provided by residues 9 to 14 and Glu-35; that span reads GAGGRM. NADP(+) is bound at residue Arg-36. Residues 99 to 101 and 123 to 126 contribute to the NAD(+) site; these read GTT and ASNY. His-156 (proton donor/acceptor) is an active-site residue. His-157 provides a ligand contact to (S)-2,3,4,5-tetrahydrodipicolinate. Residue Lys-160 is the Proton donor of the active site. 166–167 is a (S)-2,3,4,5-tetrahydrodipicolinate binding site; it reads GT.

Belongs to the DapB family.

It localises to the cytoplasm. The catalysed reaction is (S)-2,3,4,5-tetrahydrodipicolinate + NAD(+) + H2O = (2S,4S)-4-hydroxy-2,3,4,5-tetrahydrodipicolinate + NADH + H(+). It carries out the reaction (S)-2,3,4,5-tetrahydrodipicolinate + NADP(+) + H2O = (2S,4S)-4-hydroxy-2,3,4,5-tetrahydrodipicolinate + NADPH + H(+). Its pathway is amino-acid biosynthesis; L-lysine biosynthesis via DAP pathway; (S)-tetrahydrodipicolinate from L-aspartate: step 4/4. Its function is as follows. Catalyzes the conversion of 4-hydroxy-tetrahydrodipicolinate (HTPA) to tetrahydrodipicolinate. The chain is 4-hydroxy-tetrahydrodipicolinate reductase from Mannheimia succiniciproducens (strain KCTC 0769BP / MBEL55E).